The primary structure comprises 473 residues: Nuclear distribution protein PAC1 (473 aa).

The region spanning 9–41 (QAEELHKSIIAYFLSAKLPKSAAALREEIADSV) is the LisH domain. Residues 60 to 87 (TSVVRLQKKIMDLEARNSALQSELDSAT) adopt a coiled-coil conformation. Over residues 80–93 (QSELDSATPTSLSR) the composition is skewed to polar residues. The interval 80–99 (QSELDSATPTSLSRRNQDPV) is disordered. WD repeat units follow at residues 113 to 154 (SHRN…RTIK), 156 to 196 (HTRA…KNIR), 200 to 247 (GHDH…CVRT), 250 to 289 (GHVE…TKST), 292 to 352 (GHEH…IKTL), 354 to 393 (GHDN…KCVR), 397 to 434 (DAHA…ALSG), and 435 to 472 (VNGI…RVFA).

The protein belongs to the WD repeat LIS1/nudF family. As to quaternary structure, self-associates. Interacts with NDL1 and dynein.

The protein resides in the cytoplasm. The protein localises to the cytoskeleton. It is found in the spindle pole. Its function is as follows. Positively regulates the activity of the minus-end directed microtubule motor protein dynein. May enhance dynein-mediated microtubule sliding by targeting dynein to the microtubule plus end. Required for nuclear migration during vegetative growth as well as development. Required for retrograde early endosome (EE) transport from the hyphal tip. Required for localization of dynein to the mitotic spindle poles. Recruits additional proteins to the dynein complex at SPBs. This is Nuclear distribution protein PAC1 from Ajellomyces dermatitidis (strain ER-3 / ATCC MYA-2586) (Blastomyces dermatitidis).